The following is a 717-amino-acid chain: Putative amino acid transporter AAT1 (717 aa).

The segment covering 1-10 has biased composition (basic and acidic residues); the sequence is MREGAFDASR. The disordered stretch occupies residues 1–88; sequence MREGAFDASR…DRAQTDSRQE (88 aa). Positions 16-25 are enriched in polar residues; the sequence is QRPSSLSTAQ. A compositionally biased stretch (low complexity) spans 26-53; sequence PPSDSRPPSSSSPPSSSSSSSSASSSSP. Residues 74–88 are compositionally biased toward basic and acidic residues; the sequence is SAEKMDRAQTDSRQE. Transmembrane regions (helical) follow at residues 124–143, 149–170, 196–216, 236–253, 265–283, 303–320, 341–358, and 378–402; these read VLTLASSCLGAGVLATPYAM, LIGLSLLCMHTFVSFFTTYILM, AVDAIIVLNGLGVCLSFLVFL, HRAALLCASMVVIFPLSV, FFPVCALLFSLSCVVYRSL, FKSFNVFLFAFMQHINVC, AALLEYCLYTPIATLGYL, and LMHVCTLLLSFSMVLGVPLTLIPTV. Residues 462–602 form a disordered region; that stretch reads GDAEYGGAEA…REEREEREGQ (141 aa). Low complexity predominate over residues 463–477; it reads DAEYGGAEAGEATRG. Residues 497–519 show a composition bias toward basic and acidic residues; it reads ARNRDRSRLHADSERSAGDREGS. Low complexity predominate over residues 547–558; it reads GSSSASSRSVDS. The span at 584-602 shows a compositional bias: basic and acidic residues; that stretch reads SGDREAREEREEREEREGQ. Helical transmembrane passes span 622–638, 644–669, and 681–702; these read VCVAACLLPVLLLALVL, VVGLLGGFFSTLLMSALPSIIFYAGI, and LLMVFLLGVTCVGAFSSVIIIL.

This sequence belongs to the amino acid/polyamine transporter 2 family.

Its subcellular location is the vacuole membrane. In terms of biological role, putative amino acid transporter. Probably transports arginine. Involved in maintaining the osmotic homeostasis of the digestive vacuole. Required for extracellular parasite survival and bradyzoite differentiation. The polypeptide is Putative amino acid transporter AAT1 (Toxoplasma gondii (strain ATCC 50611 / Me49)).